Here is a 442-residue protein sequence, read N- to C-terminus: CBL-interacting serine/threonine-protein kinase 14 (442 aa).

A Protein kinase domain is found at 22–276 (YEVGKLVGCG…IEEIIHDPWF (255 aa)). ATP contacts are provided by residues 28 to 36 (VGCGAFAKV) and Lys-51. The active-site Proton acceptor is Asp-144. An activation loop region spans residues 162 to 191 (DFGLSALTDQIRPDGLLHTLCGTPAYVAPE). Phosphoserine is present on Ser-166. Thr-180 bears the Phosphothreonine mark. The region spanning 305-329 (MGARRMNAFDIISGSPGFNLSGLFG) is the NAF domain. Residues 335–365 (DRVERFVSAWTAERVVERLEEIVSAENLTVA) form a PPI region.

It belongs to the protein kinase superfamily. CAMK Ser/Thr protein kinase family. SNF1 subfamily. As to quaternary structure, interacts with CBL2. Interacts with CBL3. Interacts with CBL8. Interacts with CBL9. Interacts with KIN10 and KIN11. Requires Mn(2+) as cofactor. As to expression, predominant in roots, cauline leaves, and flowers. Ubiquitous with highest expression in 7-day-old seedlings and flower buds, followed by that in cauline leaves and young siliques.

Its subcellular location is the cytoplasm. The protein localises to the nucleus. The catalysed reaction is L-seryl-[protein] + ATP = O-phospho-L-seryl-[protein] + ADP + H(+). It carries out the reaction L-threonyl-[protein] + ATP = O-phospho-L-threonyl-[protein] + ADP + H(+). Its function is as follows. CIPK serine-threonine protein kinases interact with CBL proteins. Binding of a CBL protein to the regulatory NAF domain of CIPK protein lead to the activation of the kinase in a calcium-dependent manner. The polypeptide is CBL-interacting serine/threonine-protein kinase 14 (CIPK14) (Arabidopsis thaliana (Mouse-ear cress)).